Consider the following 456-residue polypeptide: Pantothenate kinase 2, mitochondrial (456 aa).

The tract at residues 16–89 is disordered; sequence AGRFGAPMER…TSAGRPRAEG (74 aa). 2 stretches are compositionally biased toward low complexity: residues 28–39 and 55–65; these read RAAATSAAVGES and SSAAPSGSGEA. A phosphoserine mark is found at Ser55, Ser56, and Ser75. The Nuclear export signal motif lies at 154–161; sequence LELKDLTL. Glu224 (proton acceptor) is an active-site residue. Acetyl-CoA-binding residues include Ser278, Ser281, and Arg293.

This sequence belongs to the type II pantothenate kinase family. In terms of assembly, homodimer.

It is found in the cytoplasm. It localises to the cytosol. It catalyses the reaction (R)-pantothenate + ATP = (R)-4'-phosphopantothenate + ADP + H(+). It participates in cofactor biosynthesis; coenzyme A biosynthesis; CoA from (R)-pantothenate: step 1/5. With respect to regulation, inhibited by acetyl-CoA. Inhibited by calcium hopantenate. Activated by palmitoylcarnitine. In terms of biological role, catalyzes the phosphorylation of pantothenate to generate 4'-phosphopantothenate in the first and rate-determining step of coenzyme A (CoA) synthesis. The sequence is that of Pantothenate kinase 2, mitochondrial (Pank2) from Mus musculus (Mouse).